The sequence spans 197 residues: Translation machinery-associated protein 22 (197 aa).

Positions 102–173 (VQIKRVERNK…DVKEWLLEVY (72 aa)) constitute an SUI1 domain.

This sequence belongs to the DENR family. Interacts with the 40S ribosomal subunit.

It localises to the cytoplasm. This is Translation machinery-associated protein 22 (tma22) from Aspergillus niger (strain ATCC MYA-4892 / CBS 513.88 / FGSC A1513).